The primary structure comprises 252 residues: MKVIFNADDFGLTQGVNQGIVKAHLDGVVKSTTLMVGMPAEQHAVQLAKQLPDLKIGLHLRFTAGRPLTGERNLTDEHGVFTAYRDFWQRRDYQPEAIYHEAIAQVEHFLKLGLTLSHLDSHHHAHTHPQLAPIIYEVAKKYHVPLRDIGMAGEEAFGCRYHFTDFFYDQRLGIDPLMKHLLELKERFDLVEVMCHPAFVDPLLEKCSGYAKQREEELHILTSAQLIQLLVAHDIEITDYSALISAPLHSCV.

2 residues coordinate Mg(2+): H59 and H122.

It belongs to the YdjC deacetylase family. In terms of assembly, homodimer. It depends on Mg(2+) as a cofactor.

Functionally, probably catalyzes the deacetylation of acetylated carbohydrates an important step in the degradation of oligosaccharides. This Vibrio cholerae serotype O1 (strain ATCC 39315 / El Tor Inaba N16961) protein is Carbohydrate deacetylase.